Here is a 1147-residue protein sequence, read N- to C-terminus: ATP-dependent helicase/deoxyribonuclease subunit B (1147 aa).

8–15 (GGSGAGKS) contacts ATP. The [4Fe-4S] cluster site is built by Cys-780, Cys-1092, Cys-1095, and Cys-1101.

This sequence belongs to the helicase family. AddB/RexB type 1 subfamily. As to quaternary structure, heterodimer of AddA and AddB. Requires Mg(2+) as cofactor. It depends on [4Fe-4S] cluster as a cofactor.

Its function is as follows. The heterodimer acts as both an ATP-dependent DNA helicase and an ATP-dependent, dual-direction single-stranded exonuclease. Recognizes the chi site generating a DNA molecule suitable for the initiation of homologous recombination. The AddB subunit has 5' -&gt; 3' nuclease activity but not helicase activity. In Lachnoclostridium phytofermentans (strain ATCC 700394 / DSM 18823 / ISDg) (Clostridium phytofermentans), this protein is ATP-dependent helicase/deoxyribonuclease subunit B.